The chain runs to 996 residues: GPI ethanolamine phosphate transferase 1 (996 aa).

The Cytoplasmic portion of the chain corresponds to 1–8; it reads MAAFPRFR. Residues 9 to 29 form a helical membrane-spanning segment; sequence FLAIAVIFHFAYIFSIFDIYF. Topologically, residues 30–463 are lumenal; the sequence is VSPIETGMRL…LQTYDWLFLR (434 aa). N-linked (GlcNAc...) asparagine glycans are attached at residues Asn-47, Asn-147, and Asn-210. Residues 464-484 form a helical membrane-spanning segment; the sequence is ALITIGYLGWIAYALTTVVDL. At 485 to 495 the chain is on the cytoplasmic side; the sequence is HVLHGRVRPSR. A helical membrane pass occupies residues 496–516; it reads TLGGGLFFTSVLVALYASLVI. The Lumenal portion of the chain corresponds to 517-518; that stretch reads SK. A helical transmembrane segment spans residues 519–539; that stretch reads SPLTYYVYAFFPVFFWEEVYA. At 540–560 the chain is on the cytoplasmic side; that stretch reads HRESLAAGRKELLGHINSGGS. A helical transmembrane segment spans residues 561–581; the sequence is VASFVLNSALYVGVIESLALG. At 582-586 the chain is on the lumenal side; sequence YIHRE. The helical transmembrane segment at 587–607 threads the bilayer; that stretch reads ILSVLFVLGSFWPFTHGLSFL. Residues 608 to 612 lie on the Cytoplasmic side of the membrane; sequence KKHGA. A helical membrane pass occupies residues 613 to 633; it reads LSATWFLACIAMSTFTLLPAM. Over 634 to 637 the chain is Lumenal; that stretch reads KAEN. The chain crosses the membrane as a helical span at residues 638 to 658; the sequence is VNLITIGGVLMVVIGLLYLIF. At 659 to 681 the chain is on the cytoplasmic side; that stretch reads EDFVLADFSWNAKPTSRNHLSRS. A helical membrane pass occupies residues 682–702; the sequence is LVGIQVGLTVLSIIITRSSAL. Residues 703–715 are Lumenal-facing; it reads SLQAKQGLPRGNQ. A helical membrane pass occupies residues 716–734; sequence IMGWVTLVASLLMPLAYRL. Over 735–754 the chain is Cytoplasmic; it reads RPNNHYMHRILVIFLTCAPT. A helical membrane pass occupies residues 755-775; the sequence is FVILTISYEGLFYLVFSALLV. The Lumenal portion of the chain corresponds to 776–822; it reads SWVRLEHAVQKFTSSKAPQTAATKKPTTTTESHLPAPFRPLTLHDAR. Residues 823-843 traverse the membrane as a helical segment; that stretch reads VALFFFILLQSAFFSTGNVAS. Over 844–865 the chain is Cytoplasmic; the sequence is VSSFSLDSVYRLIPIFDPFSQG. The helical transmembrane segment at 866–886 threads the bilayer; it reads AMLILKLMIPFALISANLGIL. The Lumenal portion of the chain corresponds to 887–895; sequence NKRLGVAPS. The chain crosses the membrane as a helical span at residues 896 to 916; sequence ALFMVVMGISDILTLYFFWVV. At 917–932 the chain is on the cytoplasmic side; that stretch reads KDEGSWLEIGSTISHF. A helical transmembrane segment spans residues 933–953; that stretch reads VIASLLCVFVSALEPVSAAFI. Residues 954-996 lie on the Lumenal side of the membrane; the sequence is AGVEVGEESELKEEGKVAEKVVEKVNEAVEGLVSGGDGGGDES.

Belongs to the PIGG/PIGN/PIGO family. PIGN subfamily.

The protein localises to the endoplasmic reticulum membrane. Its pathway is glycolipid biosynthesis; glycosylphosphatidylinositol-anchor biosynthesis. In terms of biological role, ethanolamine phosphate transferase involved in glycosylphosphatidylinositol-anchor biosynthesis. Transfers ethanolamine phosphate to the first alpha-1,4-linked mannose of the glycosylphosphatidylinositol precursor of GPI-anchor. This is GPI ethanolamine phosphate transferase 1 (mcd-4) from Neurospora crassa (strain ATCC 24698 / 74-OR23-1A / CBS 708.71 / DSM 1257 / FGSC 987).